A 319-amino-acid chain; its full sequence is Transaldolase (319 aa).

The active-site Schiff-base intermediate with substrate is lysine 132.

Belongs to the transaldolase family. Type 1 subfamily. In terms of assembly, homodimer.

Its subcellular location is the cytoplasm. The catalysed reaction is D-sedoheptulose 7-phosphate + D-glyceraldehyde 3-phosphate = D-erythrose 4-phosphate + beta-D-fructose 6-phosphate. It functions in the pathway carbohydrate degradation; pentose phosphate pathway; D-glyceraldehyde 3-phosphate and beta-D-fructose 6-phosphate from D-ribose 5-phosphate and D-xylulose 5-phosphate (non-oxidative stage): step 2/3. Its function is as follows. Transaldolase is important for the balance of metabolites in the pentose-phosphate pathway. This Alteromonas mediterranea (strain DSM 17117 / CIP 110805 / LMG 28347 / Deep ecotype) protein is Transaldolase.